We begin with the raw amino-acid sequence, 511 residues long: Exodeoxyribonuclease 7 large subunit (511 aa).

The protein belongs to the XseA family. In terms of assembly, heterooligomer composed of large and small subunits.

It localises to the cytoplasm. The enzyme catalyses Exonucleolytic cleavage in either 5'- to 3'- or 3'- to 5'-direction to yield nucleoside 5'-phosphates.. Bidirectionally degrades single-stranded DNA into large acid-insoluble oligonucleotides, which are then degraded further into small acid-soluble oligonucleotides. In Brucella abortus (strain S19), this protein is Exodeoxyribonuclease 7 large subunit.